Here is a 216-residue protein sequence, read N- to C-terminus: Probable nicotinate-nucleotide adenylyltransferase (216 aa).

The protein belongs to the NadD family.

It carries out the reaction nicotinate beta-D-ribonucleotide + ATP + H(+) = deamido-NAD(+) + diphosphate. It participates in cofactor biosynthesis; NAD(+) biosynthesis; deamido-NAD(+) from nicotinate D-ribonucleotide: step 1/1. In terms of biological role, catalyzes the reversible adenylation of nicotinate mononucleotide (NaMN) to nicotinic acid adenine dinucleotide (NaAD). The polypeptide is Probable nicotinate-nucleotide adenylyltransferase (Shewanella baltica (strain OS195)).